A 485-amino-acid polypeptide reads, in one-letter code: Glutamate--tRNA ligase (485 aa).

A 'HIGH' region motif is present at residues 12–22; sequence PSPTGEPHVGT. Residues 253-257 carry the 'KMSKS' region motif; it reads KLSKR. Lys256 provides a ligand contact to ATP.

The protein belongs to the class-I aminoacyl-tRNA synthetase family. Glutamate--tRNA ligase type 1 subfamily. Monomer.

The protein resides in the cytoplasm. It catalyses the reaction tRNA(Glu) + L-glutamate + ATP = L-glutamyl-tRNA(Glu) + AMP + diphosphate. In terms of biological role, catalyzes the attachment of glutamate to tRNA(Glu) in a two-step reaction: glutamate is first activated by ATP to form Glu-AMP and then transferred to the acceptor end of tRNA(Glu). The polypeptide is Glutamate--tRNA ligase (Sinorhizobium medicae (strain WSM419) (Ensifer medicae)).